A 136-amino-acid polypeptide reads, in one-letter code: Small ribosomal subunit protein bS16 (136 aa).

This sequence belongs to the bacterial ribosomal protein bS16 family.

This chain is Small ribosomal subunit protein bS16, found in Pseudarthrobacter chlorophenolicus (strain ATCC 700700 / DSM 12829 / CIP 107037 / JCM 12360 / KCTC 9906 / NCIMB 13794 / A6) (Arthrobacter chlorophenolicus).